The sequence spans 192 residues: Thymidine kinase (192 aa).

ATP-binding positions include 9 to 16 and 87 to 90; these read SAMNAGKS and DECQ. Catalysis depends on E88, which acts as the Proton acceptor. Zn(2+) is bound by residues C145, C147, C182, and H185.

Belongs to the thymidine kinase family. In terms of assembly, homotetramer.

It localises to the cytoplasm. It carries out the reaction thymidine + ATP = dTMP + ADP + H(+). The chain is Thymidine kinase from Vibrio vulnificus (strain YJ016).